The primary structure comprises 101 residues: Enhancer of yellow 2 transcription factor (101 aa).

Belongs to the ENY2 family. Component of the nuclear pore complex (NPC)-associated AMEX complex (anchoring and mRNA export complex), composed of at least e(y)2 and xmas-2. Component of the SAGA transcription coactivator-HAT complexes, at least composed of Ada2b, e(y)2, Pcaf/Gcn5, Taf10 and Nipped-A/Trrap. Within the SAGA complex, e(y)2, Sgf11, and not/nonstop form an additional subcomplex of SAGA called the DUB module (deubiquitination module). Component of the THO complex, composed of at least e(y)2, HPR1, THO2, THOC5, THOC6 and THOC7. Interacts with e(y)1. Interacts with su(Hw) (via zinc fingers). Interacts with xmas-2; required for localization to the nuclear periphery. Interacts with the nuclear pore complex (NPC).

It is found in the nucleus. The protein localises to the nucleoplasm. Its subcellular location is the cytoplasm. Its function is as follows. Involved in mRNA export coupled transcription activation by association with both the AMEX and the SAGA complexes. The SAGA complex is a multiprotein complex that activates transcription by remodeling chromatin and mediating histone acetylation and deubiquitination. Within the SAGA complex, participates in a subcomplex that specifically deubiquitinates histone H2B. The SAGA complex is recruited to specific gene promoters by activators, where it is required for transcription. Required for nuclear receptor-mediated transactivation. Involved in transcription elongation by recruiting the THO complex onto nascent mRNA. The AMEX complex functions in docking export-competent ribonucleoprotein particles (mRNPs) to the nuclear entrance of the nuclear pore complex (nuclear basket). AMEX participates in mRNA export and accurate chromatin positioning in the nucleus by tethering genes to the nuclear periphery. The protein is Enhancer of yellow 2 transcription factor of Drosophila yakuba (Fruit fly).